Here is a 63-residue protein sequence, read N- to C-terminus: MHFSGVVLILLSMTLVNFVFVETKVETGQYVKCKYDICAKSCQEEKGKRTGFCSNPECICSKD.

The N-terminal stretch at 1-23 (MHFSGVVLILLSMTLVNFVFVET) is a signal peptide. Disulfide bonds link Cys-33-Cys-53, Cys-38-Cys-58, and Cys-42-Cys-60.

In terms of tissue distribution, expressed by the venom gland.

The protein localises to the secreted. The chain is Cysteine-rich peptide clone 2 from Tityus costatus (Brazilian scorpion).